The following is a 441-amino-acid chain: Ribosomal protein uS12 methylthiotransferase RimO (441 aa).

Residues 7–117 (ASIAMISLGC…VVLEVHRAAP (111 aa)) form the MTTase N-terminal domain. Positions 16, 52, 81, 150, 154, and 157 each coordinate [4Fe-4S] cluster. The Radical SAM core domain maps to 136–373 (LTPRHYAYLK…MAHQQAISAA (238 aa)). The region spanning 376 to 441 (QTRVGREIDV…DEYDLHGDAV (66 aa)) is the TRAM domain.

The protein belongs to the methylthiotransferase family. RimO subfamily. The cofactor is [4Fe-4S] cluster.

It is found in the cytoplasm. It catalyses the reaction L-aspartate(89)-[ribosomal protein uS12]-hydrogen + (sulfur carrier)-SH + AH2 + 2 S-adenosyl-L-methionine = 3-methylsulfanyl-L-aspartate(89)-[ribosomal protein uS12]-hydrogen + (sulfur carrier)-H + 5'-deoxyadenosine + L-methionine + A + S-adenosyl-L-homocysteine + 2 H(+). Its function is as follows. Catalyzes the methylthiolation of an aspartic acid residue of ribosomal protein uS12. The polypeptide is Ribosomal protein uS12 methylthiotransferase RimO (Bordetella petrii (strain ATCC BAA-461 / DSM 12804 / CCUG 43448)).